The sequence spans 144 residues: MLVPKRVKHRKVQRGKMRGEAKGGKTVTFGEFGLQALDSHWISNRQIEAARIAMTRYMKRGGKVWIKIFPHLSYTSKGVGTRMGNGKGAPEGWVAPVKRMKVMFEVAGVPEEVAREALRLAGNKLPVRTKIVKREEVGGQSNED.

The span at 1 to 16 (MLVPKRVKHRKVQRGK) shows a compositional bias: basic residues. Residues 1-20 (MLVPKRVKHRKVQRGKMRGE) form a disordered region.

The protein belongs to the universal ribosomal protein uL16 family. In terms of assembly, part of the 50S ribosomal subunit.

Its function is as follows. Binds 23S rRNA and is also seen to make contacts with the A and possibly P site tRNAs. This chain is Large ribosomal subunit protein uL16, found in Limosilactobacillus fermentum (strain NBRC 3956 / LMG 18251) (Lactobacillus fermentum).